A 133-amino-acid chain; its full sequence is Cytochrome c-type biogenesis protein CcmE (133 aa).

At 1–7 (MKRKHKR) the chain is on the cytoplasmic side. A helical; Signal-anchor for type II membrane protein transmembrane segment spans residues 8-28 (LLFIIVTFIIFGSSVVIVLNK). Residues 29–133 (LRSNISFFFT…NYKPGKYRAK (105 aa)) are Periplasmic-facing. Histidine 121 and tyrosine 125 together coordinate heme.

The protein belongs to the CcmE/CycJ family.

The protein resides in the cell inner membrane. In terms of biological role, heme chaperone required for the biogenesis of c-type cytochromes. Transiently binds heme delivered by CcmC and transfers the heme to apo-cytochromes in a process facilitated by CcmF and CcmH. This is Cytochrome c-type biogenesis protein CcmE from Ehrlichia canis (strain Jake).